Here is a 274-residue protein sequence, read N- to C-terminus: Diaminopimelate epimerase (274 aa).

Residues Asn11, Gln44, and Asn64 each coordinate substrate. The active-site Proton donor is the Cys73. Residues 74–75, Asn157, Asn190, and 208–209 each bind substrate; these read GN and ER. Cys217 serves as the catalytic Proton acceptor. Residue 218 to 219 coordinates substrate; sequence GS.

This sequence belongs to the diaminopimelate epimerase family. As to quaternary structure, homodimer.

The protein localises to the cytoplasm. The enzyme catalyses (2S,6S)-2,6-diaminopimelate = meso-2,6-diaminopimelate. It functions in the pathway amino-acid biosynthesis; L-lysine biosynthesis via DAP pathway; DL-2,6-diaminopimelate from LL-2,6-diaminopimelate: step 1/1. Its function is as follows. Catalyzes the stereoinversion of LL-2,6-diaminopimelate (L,L-DAP) to meso-diaminopimelate (meso-DAP), a precursor of L-lysine and an essential component of the bacterial peptidoglycan. The sequence is that of Diaminopimelate epimerase from Cronobacter sakazakii (strain ATCC BAA-894) (Enterobacter sakazakii).